The chain runs to 86 residues: uncharacterized protein (86 aa).

The next 2 membrane-spanning stretches (helical) occupy residues 21-43 (VFWVGLVVYYGFVALCWIGEATA) and 53-75 (FWYASFLGTFLIPLFMSIIYFYF).

It localises to the cell membrane. This is an uncharacterized protein from Archaeoglobus fulgidus (strain ATCC 49558 / DSM 4304 / JCM 9628 / NBRC 100126 / VC-16).